A 187-amino-acid polypeptide reads, in one-letter code: MTVMEFFALSAGEWMCQRTSHHLAFRRSEGGRSRMQIATLSPADPAVIQVCELFKVDPRRAVGAARVQWNGEQEWDNEEYKGDVVLVPIPDPDNPMRGQLLRDQGYAEKVPVAGTYVMGSDGALTLYTEYEMTESEERIWFASPNLRLRASTVKRFGGFSMASFCSEVRKLSASPSPISAVAESRSL.

This sequence belongs to the CpcS/CpeS biliprotein lyase family.

Its function is as follows. Covalently attaches a chromophore to Cys residue(s) of phycobiliproteins. In Synechococcus sp. (strain JA-3-3Ab) (Cyanobacteria bacterium Yellowstone A-Prime), this protein is Chromophore lyase CpcS/CpeS 2.